Reading from the N-terminus, the 310-residue chain is Porphobilinogen deaminase (310 aa).

At C240 the chain carries S-(dipyrrolylmethanemethyl)cysteine.

Belongs to the HMBS family. In terms of assembly, monomer. The cofactor is dipyrromethane.

The enzyme catalyses 4 porphobilinogen + H2O = hydroxymethylbilane + 4 NH4(+). The protein operates within porphyrin-containing compound metabolism; protoporphyrin-IX biosynthesis; coproporphyrinogen-III from 5-aminolevulinate: step 2/4. Tetrapolymerization of the monopyrrole PBG into the hydroxymethylbilane pre-uroporphyrinogen in several discrete steps. The sequence is that of Porphobilinogen deaminase from Desulfosudis oleivorans (strain DSM 6200 / JCM 39069 / Hxd3) (Desulfococcus oleovorans).